Consider the following 150-residue polypeptide: Large ribosomal subunit protein bL9 (150 aa).

The protein belongs to the bacterial ribosomal protein bL9 family.

In terms of biological role, binds to the 23S rRNA. This chain is Large ribosomal subunit protein bL9, found in Polaromonas sp. (strain JS666 / ATCC BAA-500).